An 83-amino-acid chain; its full sequence is Mu-theraphotoxin-Hhn2m (83 aa).

A signal peptide spans 1–21; it reads MKASMFLALAGLVLLFVVGYA. Residues 22-48 constitute a propeptide that is removed on maturation; the sequence is SESEEKEFPIELLSKIFAVDVFKGEER. Intrachain disulfides connect cysteine 50–cysteine 65, cysteine 57–cysteine 70, and cysteine 64–cysteine 77. Residue leucine 81 is modified to Leucine amide.

Belongs to the neurotoxin 10 (Hwtx-1) family. 15 (Hntx-3) subfamily. As to quaternary structure, monomer. In terms of tissue distribution, expressed by the venom gland.

It localises to the secreted. In terms of biological role, lethal neurotoxin. Selectively blocks tetrodotoxin-sensitive voltage-gated sodium channels (Nav). Does not affect tetrodotoxin-resistant voltage-gated sodium channels or calcium channels. This is Mu-theraphotoxin-Hhn2m from Cyriopagopus hainanus (Chinese bird spider).